The following is a 488-amino-acid chain: L-arabinose isomerase 1 (488 aa).

Positions 306, 331, 348, and 447 each coordinate Mn(2+).

It belongs to the arabinose isomerase family. Mn(2+) is required as a cofactor.

The enzyme catalyses beta-L-arabinopyranose = L-ribulose. Its pathway is carbohydrate degradation; L-arabinose degradation via L-ribulose; D-xylulose 5-phosphate from L-arabinose (bacterial route): step 1/3. In terms of biological role, catalyzes the conversion of L-arabinose to L-ribulose. This chain is L-arabinose isomerase 1, found in Clostridium acetobutylicum (strain ATCC 824 / DSM 792 / JCM 1419 / IAM 19013 / LMG 5710 / NBRC 13948 / NRRL B-527 / VKM B-1787 / 2291 / W).